We begin with the raw amino-acid sequence, 63 residues long: Large ribosomal subunit protein eL37 (63 aa).

4 residues coordinate Zn(2+): cysteine 20, cysteine 23, cysteine 35, and cysteine 38. The segment at 20–38 (CRRCGHHSFNVRKGYCAHC) adopts a C4-type zinc-finger fold.

This sequence belongs to the eukaryotic ribosomal protein eL37 family. Zn(2+) serves as cofactor.

Its function is as follows. Binds to the 23S rRNA. This Thermofilum pendens (strain DSM 2475 / Hrk 5) protein is Large ribosomal subunit protein eL37.